The chain runs to 132 residues: Small ribosomal subunit protein uS8 (132 aa).

This sequence belongs to the universal ribosomal protein uS8 family. As to quaternary structure, part of the 30S ribosomal subunit. Contacts proteins S5 and S12.

Functionally, one of the primary rRNA binding proteins, it binds directly to 16S rRNA central domain where it helps coordinate assembly of the platform of the 30S subunit. In Clostridioides difficile (strain 630) (Peptoclostridium difficile), this protein is Small ribosomal subunit protein uS8.